Consider the following 448-residue polypeptide: Probable ribonuclease FAU-1 (448 aa).

It belongs to the FAU-1 family.

Functionally, probable RNase involved in rRNA stability through maturation and/or degradation of precursor rRNAs. Binds to RNA in loop regions with AU-rich sequences. The polypeptide is Probable ribonuclease FAU-1 (Pyrobaculum calidifontis (strain DSM 21063 / JCM 11548 / VA1)).